A 229-amino-acid chain; its full sequence is Potassium/proton antiporter CemA (229 aa).

4 helical membrane passes run 7–27 (LASL…SLSF), 106–126 (IILH…YFFL), 154–174 (ILLV…ELMI), and 189–209 (IISG…KYWI).

The protein belongs to the CemA family.

The protein resides in the plastid. The protein localises to the chloroplast inner membrane. The catalysed reaction is K(+)(in) + H(+)(out) = K(+)(out) + H(+)(in). In terms of biological role, contributes to K(+)/H(+) antiport activity by supporting proton efflux to control proton extrusion and homeostasis in chloroplasts in a light-dependent manner to modulate photosynthesis. Prevents excessive induction of non-photochemical quenching (NPQ) under continuous-light conditions. Indirectly promotes efficient inorganic carbon uptake into chloroplasts. This chain is Potassium/proton antiporter CemA, found in Phalaenopsis aphrodite subsp. formosana (Moth orchid).